The following is a 413-amino-acid chain: Serine/threonine-protein phosphatase 2A 55 kDa regulatory subunit B beta isoform (413 aa).

WD repeat units follow at residues E1–V31, E57–E98, A141–N179, and E190–R230. S245 carries the post-translational modification Phosphoserine. 3 WD repeats span residues E249–E287, E304–L345, and D380–V412. The residue at position 265 (Y265) is a Phosphotyrosine. T268 bears the Phosphothreonine mark.

This sequence belongs to the phosphatase 2A regulatory subunit B family. As to quaternary structure, PP2A consists of a common heterodimeric core enzyme, composed of a 36 kDa catalytic subunit (subunit C) and a 65 kDa constant regulatory subunit (PR65 or subunit A), that associates with a variety of regulatory subunits. Proteins that associate with the core dimer include three families of regulatory subunits B (the R2/B/PR55/B55, R3/B''/PR72/PR130/PR59 and R5/B'/B56 families), the 48 kDa variable regulatory subunit, viral proteins, and cell signaling molecules. Interacts with TOMM22. Interacts with IER5 (via N- and C-terminal regions). In terms of tissue distribution, brain.

The protein localises to the cytoplasm. It localises to the cytoskeleton. The protein resides in the membrane. In terms of biological role, the B regulatory subunit might modulate substrate selectivity and catalytic activity, and might also direct the localization of the catalytic enzyme to a particular subcellular compartment. This is Serine/threonine-protein phosphatase 2A 55 kDa regulatory subunit B beta isoform (PPP2R2B) from Oryctolagus cuniculus (Rabbit).